The sequence spans 89 residues: Signal recognition particle 19 kDa protein (89 aa).

It belongs to the SRP19 family. In terms of assembly, part of the signal recognition particle protein translocation system, which is composed of SRP and FtsY. Archaeal SRP consists of a 7S RNA molecule of 300 nucleotides and two protein subunits: SRP54 and SRP19.

It is found in the cytoplasm. In terms of biological role, involved in targeting and insertion of nascent membrane proteins into the cytoplasmic membrane. Binds directly to 7S RNA and mediates binding of the 54 kDa subunit of the SRP. The chain is Signal recognition particle 19 kDa protein from Methanobrevibacter smithii (strain ATCC 35061 / DSM 861 / OCM 144 / PS).